The sequence spans 797 residues: Calcium-transporting ATPase CtpE (797 aa).

Helical transmembrane passes span 55-75 (LLLIVLATGSLINGMFGLLII), 215-235 (ILQFITYLLVPAGLLTIYTQL), and 254-274 (VPMVPEGLVLMTSIAFAVGVV). Residue D301 is the 4-aspartylphosphate intermediate of the active site. Residues D301, T303, and D536 each coordinate Mg(2+). Transmembrane regions (helical) follow at residues 601–621 (TVYSVLLALLVGIECLIAIPL), 633–653 (IHVTIAAWFTIGIPAFILSLA), 667–687 (VMTSAVPFGLVIGVATFVTYL), 703–723 (ASTAALITLLMTALWVLAVIA), 729–749 (WRLALVLPSGLAYVVIFSLPL), and 764–784 (TSIALAVGVVGAATIEAMWWI).

This sequence belongs to the cation transport ATPase (P-type) (TC 3.A.3) family.

Its subcellular location is the cell membrane. The enzyme catalyses Ca(2+)(in) + ATP + H2O = Ca(2+)(out) + ADP + phosphate + H(+). In terms of biological role, P-type ATPase involved in specific uptake of calcium. The protein is Calcium-transporting ATPase CtpE (ctpE) of Mycobacterium tuberculosis (strain CDC 1551 / Oshkosh).